Reading from the N-terminus, the 104-residue chain is UPF0145 protein VIBHAR_02090 (104 aa).

It belongs to the UPF0145 family.

The sequence is that of UPF0145 protein VIBHAR_02090 from Vibrio campbellii (strain ATCC BAA-1116).